A 529-amino-acid chain; its full sequence is Bifunctional purine biosynthesis protein PurH (529 aa).

The MGS-like domain occupies 2-148; sequence QHLRPIRRAL…KNHKDVTIVV (147 aa).

This sequence belongs to the PurH family.

It carries out the reaction (6R)-10-formyltetrahydrofolate + 5-amino-1-(5-phospho-beta-D-ribosyl)imidazole-4-carboxamide = 5-formamido-1-(5-phospho-D-ribosyl)imidazole-4-carboxamide + (6S)-5,6,7,8-tetrahydrofolate. The enzyme catalyses IMP + H2O = 5-formamido-1-(5-phospho-D-ribosyl)imidazole-4-carboxamide. It functions in the pathway purine metabolism; IMP biosynthesis via de novo pathway; 5-formamido-1-(5-phospho-D-ribosyl)imidazole-4-carboxamide from 5-amino-1-(5-phospho-D-ribosyl)imidazole-4-carboxamide (10-formyl THF route): step 1/1. It participates in purine metabolism; IMP biosynthesis via de novo pathway; IMP from 5-formamido-1-(5-phospho-D-ribosyl)imidazole-4-carboxamide: step 1/1. This is Bifunctional purine biosynthesis protein PurH from Proteus mirabilis (strain HI4320).